A 497-amino-acid chain; its full sequence is 3-octaprenyl-4-hydroxybenzoate carboxy-lyase (497 aa).

Asn175 provides a ligand contact to Mn(2+). Prenylated FMN contacts are provided by residues 178–180, 192–194, and 197–198; these read IYR, RWL, and RG. Glu241 contacts Mn(2+). Asp290 (proton donor) is an active-site residue.

It belongs to the UbiD family. Homohexamer. It depends on prenylated FMN as a cofactor. Requires Mn(2+) as cofactor.

It localises to the cell membrane. It carries out the reaction a 4-hydroxy-3-(all-trans-polyprenyl)benzoate + H(+) = a 2-(all-trans-polyprenyl)phenol + CO2. It functions in the pathway cofactor biosynthesis; ubiquinone biosynthesis. Functionally, catalyzes the decarboxylation of 3-octaprenyl-4-hydroxy benzoate to 2-octaprenylphenol, an intermediate step in ubiquinone biosynthesis. The protein is 3-octaprenyl-4-hydroxybenzoate carboxy-lyase of Shigella sonnei (strain Ss046).